The chain runs to 285 residues: Nucleotide-binding protein FMG_1084 (285 aa).

8–15 (GMSGAGKS) serves as a coordination point for ATP. Residue 59–62 (DIRG) coordinates GTP.

It belongs to the RapZ-like family.

Displays ATPase and GTPase activities. The chain is Nucleotide-binding protein FMG_1084 from Finegoldia magna (strain ATCC 29328 / DSM 20472 / WAL 2508) (Peptostreptococcus magnus).